The primary structure comprises 245 residues: Purine nucleoside phosphorylase (245 aa).

His7 contacts a purine D-ribonucleoside. Residues 23–27, Arg45, and 88–91 each bind phosphate; these read GDPGR and RAGS. 183 to 184 serves as a coordination point for a purine D-ribonucleoside; it reads ME. Asp206 (proton donor) is an active-site residue.

Belongs to the PNP/MTAP phosphorylase family. Homohexamer; trimer of homodimers.

It carries out the reaction inosine + phosphate = alpha-D-ribose 1-phosphate + hypoxanthine. It catalyses the reaction guanosine + phosphate = alpha-D-ribose 1-phosphate + guanine. The catalysed reaction is 2'-deoxyguanosine + phosphate = 2-deoxy-alpha-D-ribose 1-phosphate + guanine. The enzyme catalyses 2'-deoxyinosine + phosphate = 2-deoxy-alpha-D-ribose 1-phosphate + hypoxanthine. It carries out the reaction S-methyl-5'-thioinosine + phosphate = 5-(methylsulfanyl)-alpha-D-ribose 1-phosphate + hypoxanthine. Its pathway is purine metabolism; purine nucleoside salvage. With respect to regulation, inhibited by Immucillin-H and 5'-methylthio-Immucillin-H. Inhibited by 5'-deaza-1'-aza-2c-deoxy-1'-(9-methylene)-Immucilin-G (DADMe-ImmG). In terms of biological role, as part of the purine salvage pathway, catalyzes the phosphorolytic breakdown of the N-glycosidic bond in the beta-(deoxy)ribonucleoside molecules, with the formation of the corresponding free purine bases and pentose-1-phosphate. Preferentially acts on inosine and guanosine, and to a lesser extent on 2'-deoxyguanosine and guanosine. Also catalyzes the phosphorylation of S-methyl-5'-thioinosine (MTI) to hypoxanthine; MTI is produced by adenosine deaminase (ADA)-mediated breakdown of S-methyl-5'-thioadenosine (MTA), a major by-product of polyamine biosynthesis. Generates hypoxanthine from both the purine salvage pathway and from polyamine metabolism which is required for nucleic acids synthesis. Has no activity towards adenosine. This is Purine nucleoside phosphorylase from Plasmodium falciparum (isolate 3D7).